The following is a 117-amino-acid chain: Large ribosomal subunit protein bL20 (117 aa).

The protein belongs to the bacterial ribosomal protein bL20 family.

In terms of biological role, binds directly to 23S ribosomal RNA and is necessary for the in vitro assembly process of the 50S ribosomal subunit. It is not involved in the protein synthesizing functions of that subunit. The polypeptide is Large ribosomal subunit protein bL20 (Campylobacter hominis (strain ATCC BAA-381 / DSM 21671 / CCUG 45161 / LMG 19568 / NCTC 13146 / CH001A)).